A 203-amino-acid polypeptide reads, in one-letter code: uncharacterized protein (203 aa).

A disordered region spans residues 1 to 23; that stretch reads MGSSFVIDRSSSSPAPPRGPAPK.

This is an uncharacterized protein from Saccharomyces cerevisiae (strain ATCC 204508 / S288c) (Baker's yeast).